The chain runs to 179 residues: MSLKDRFDRFIDYFTEDEDSSLPYEKRDEPVFTPVNSSQEPALPMNQPSQSAGTKENNITRLHARQQELANQSQRATDKVIIDVRYPRKYEDATEIVDLLAGNESILIDFQYMTEVQARRCLDYLDGACHVLAGNLKKVASTMYLLTPVNVIVNVEDIRLPDEDQQGEFGFDMKRNRVR.

The interval 18–55 (EDSSLPYEKRDEPVFTPVNSSQEPALPMNQPSQSAGTK) is disordered. Residues 34–55 (PVNSSQEPALPMNQPSQSAGTK) show a composition bias toward polar residues.

Belongs to the SepF family. As to quaternary structure, homodimer. Interacts with FtsZ.

The protein localises to the cytoplasm. In terms of biological role, cell division protein that is part of the divisome complex and is recruited early to the Z-ring. Probably stimulates Z-ring formation, perhaps through the cross-linking of FtsZ protofilaments. Its function overlaps with FtsA. The chain is Cell division protein SepF from Streptococcus pneumoniae (strain ATCC 700669 / Spain 23F-1).